A 157-amino-acid polypeptide reads, in one-letter code: Protein-export protein SecB (157 aa).

The protein belongs to the SecB family. As to quaternary structure, homotetramer, a dimer of dimers. One homotetramer interacts with 1 SecA dimer.

Its subcellular location is the cytoplasm. In terms of biological role, one of the proteins required for the normal export of preproteins out of the cell cytoplasm. It is a molecular chaperone that binds to a subset of precursor proteins, maintaining them in a translocation-competent state. It also specifically binds to its receptor SecA. This Dichelobacter nodosus (strain VCS1703A) protein is Protein-export protein SecB.